The chain runs to 770 residues: ARF GTPase-activating protein GIT1 (770 aa).

The region spanning 1 to 124 is the Arf-GAP domain; it reads MSRKGPRAEV…AFVHKLPCRD (124 aa). The interval 1-124 is interaction with gamma-tubulin and localization to the centrosome; that stretch reads MSRKGPRAEV…AFVHKLPCRD (124 aa). The C4-type zinc-finger motif lies at 11–34; sequence CADCSAPDPGWASISRGVLVCDEC. ANK repeat units lie at residues 132–161, 166–195, and 199–228; these read DLSK…QANF, KGTT…DPGS, and NGRT…ELTD. Tyr-224 carries the post-translational modification Phosphotyrosine. The segment at 245–374 is interaction with PCLO; the sequence is HYIIPQMADR…QGKSLSSPTD (130 aa). The interaction with PTK2/FAK1 stretch occupies residues 253 to 424; that stretch reads DRSRQKCMSQ…NRARSMDSSD (172 aa). The interval 254-376 is interaction with ARHGEF7; that stretch reads RSRQKCMSQS…KSLSSPTDNL (123 aa). A disordered region spans residues 363–425; sequence RQQGKSLSSP…RARSMDSSDL (63 aa). The span at 366–383 shows a compositional bias: polar residues; sequence GKSLSSPTDNLELSARNQ. Phosphoserine occurs at positions 368 and 371. Thr-373 carries the phosphothreonine modification. An interaction with NCK2 and GRIN3A region spans residues 375–596; the sequence is NLELSARNQS…QEGSRHASKL (222 aa). A required for localization at synapses region spans residues 375–596; sequence NLELSARNQS…QEGSRHASKL (222 aa). 2 positions are modified to phosphoserine: Ser-379 and Ser-384. A Phosphotyrosine modification is found at Tyr-392. Residues Ser-394 and Ser-397 each carry the phosphoserine modification. Over residues 394 to 403 the composition is skewed to acidic residues; it reads SVASDEDTDQ. Thr-401 carries the post-translational modification Phosphothreonine. Phosphoserine is present on residues Ser-419, Ser-422, and Ser-426. Positions 420–475 are interaction with MAPK1; the sequence is MDSSDLSDGAVTLQEYLELKKALATSEAKVQQLMKVNSSLSDELRKLQREIHKLQA. Residues 429–629 are interaction with IKBKG; it reads AVTLQEYLEL…EGKRFLELSK (201 aa). A coiled-coil region spans residues 449–483; that stretch reads VQQLMKVNSSLSDELRKLQREIHKLQAENLQLRQP. Residues Ser-507 and Ser-545 each carry the phosphoserine modification. Thr-546 is modified (phosphothreonine). 2 positions are modified to phosphotyrosine: Tyr-554 and Tyr-563. Phosphoserine occurs at positions 570, 580, 601, and 605. Residues 574–586 are compositionally biased toward low complexity; sequence VTFTPSSPLLSSS. The tract at residues 574–615 is disordered; sequence VTFTPSSPLLSSSQEGSRHASKLSRHGSGAESDYENTQSGEP. Position 610 is a phosphothreonine (Thr-610). The residue at position 639 (Ser-639) is a Phosphoserine. An interaction with PXN and TGFB1I1 region spans residues 646 to 770; sequence PGLPSTEDVI…VTITTREKKQ (125 aa).

In terms of assembly, forms homodimers and possibly oligomers. May form heterooligomers with GIT2. Interacts with G protein-coupled receptor kinases, including GRK2, GRK3, GRK5 and GRK6. Interacts with PPFIA1, PPFIA2 and PPFIA4. Interacts with GRIP1 and forms a ternary complex with PPFIA1 and GRIP1. Directly interacts with ARHGEF7/beta-PIX, forming in vitro a heptameric complex made of a GIT1 dimer and an ARHGEF7 trimer. Directly interacts with PXN/paxillin; this interaction is enhanced in the presence of ARHGEF7. Directly interacts (via C-terminus) with TGFB1I1/Hic-5 (via LD motif 3). Directly interacts with PTK2/FAK1. May interact with PTK2B/PYK2; this interaction may be indirect. Interacts with AMPA receptors GRIA2/3. Directly interacts with protein Piccolo/PCLO. Forms a complex with Ephrin-B1/EFNB1 and NCK2/GRB4 (via SH2); this interaction is important for spine morphogenesis and synapse formation. Interaction with NCK2 is transient and depends upon GIT1 phosphorylation at Tyr-392. Interacts with GRIN3A/GluN3A (via C-terminus); this interaction competes with GIT1 interaction with ARHGEF7 and limits synaptic localization of GIT1. Interacts with IKBKG/NEMO in resting bone mesenchymal stem cells, as well as in TNF-stimulated cells; this interaction may increase IKBKG affinity for 'Lys-63'-linked polyubiquitin chains. Interacts with GABA(A) receptors, including GABRB3 and GABRG2. Interacts with SCRIB. Interacts (via N- and C-terminus) with ENTR1/SDCCAG3 (via N-terminus); this interaction is direct. May form a tripartite complex with ENTR1 and PTPN13. Interacts with YWHAZ. Interacts with PAK1 and PAK3. Directly interacts (via N-terminus) with gamma-tubulin. Interacts with MAPK1 and MAPK3; this interaction is required for MAPK1/3 recruitment to focal adhesions. Phosphorylated on tyrosine residues by PTK2/FAK1 and SRC in growing fibroblasts. Phosphorylation at Tyr-392 is induced by activation of Ephrin-B1/EFNB1 and catalyzed by SRC family kinases. It is required for the interaction with NCK2 and for GIT1 recruitment to synapses in hippocampal neurons. As to expression, widely expressed. Expressed at high levels in testis (at protein level). Expressed in the brain, including in CA1 hippocampal neurons, in the amygdala, and thalamic nuclei (at protein level).

It is found in the cytoplasm. It localises to the synapse. Its subcellular location is the presynapse. The protein localises to the postsynapse. The protein resides in the postsynaptic density. It is found in the cell junction. It localises to the focal adhesion. Its subcellular location is the cell projection. The protein localises to the lamellipodium. The protein resides in the cytoskeleton. It is found in the microtubule organizing center. It localises to the centrosome. Its subcellular location is the spindle pole. Its function is as follows. GTPase-activating protein for ADP ribosylation factor family members, including ARF1. Multidomain scaffold protein that interacts with numerous proteins and therefore participates in many cellular functions, including receptor internalization, focal adhesion remodeling, and signaling by both G protein-coupled receptors and tyrosine kinase receptors. Through PAK1 activation, positively regulates microtubule nucleation during interphase. Plays a role in the regulation of cytokinesis; for this function, may act in a pathway also involving ENTR1 and PTPN13. May promote cell motility both by regulating focal complex dynamics and by the activation of RAC1. May act as scaffold for MAPK1/3 signal transduction, recruiting MAPK1/3 to focal adhesions after EGF stimulation via a Src-dependent pathway, hence stimulating cell migration. Plays a role in brain development and function. Involved in the regulation of spine density and synaptic plasticity that is required for processes involved in learning. Plays an important role in dendritic spine morphogenesis and synapse formation. In hippocampal neurons, recruits guanine nucleotide exchange factors (GEFs), such as ARHGEF7/beta-PIX, to the synaptic membrane. These in turn locally activate RAC1, which is an essential step for spine morphogenesis and synapse formation. May contribute to the organization of presynaptic active zones through oligomerization and formation of a Piccolo/PCLO-based protein network, which includes ARHGEF7/beta-PIX and FAK1. In neurons, through its interaction with liprin-alpha family members, may be required for AMPA receptor (GRIA2/3) proper targeting to the cell membrane. In complex with GABA(A) receptors and ARHGEF7, plays a crucial role in regulating GABA(A) receptor synaptic stability, maintaining GPHN/gephyrin scaffolds and hence GABAergic inhibitory synaptic transmission, by locally coordinating RAC1 and PAK1 downstream effector activity, leading to F-actin stabilization. May also be important for RAC1 downstream signaling pathway through PAK3 and regulation of neuronal inhibitory transmission at presynaptic input. Required for successful bone regeneration during fracture healing. The function in intramembranous ossification may, at least partly, exerted by macrophages in which GIT1 is a key negative regulator of redox homeostasis, IL1B production, and glycolysis, acting through the ERK1/2/NRF2/NFE2L2 axis. May also play a role in angiogenesis during fracture healing. In this process, may regulate activation of the canonical NF-kappa-B signal in bone mesenchymal stem cells by enhancing the interaction between NEMO and 'Lys-63'-ubiquitinated RIPK1/RIP1, eventually leading to enhanced production of VEGFA and others angiogenic factors. Essential for VEGF signaling through the activation of phospholipase C-gamma and ERK1/2, hence may control endothelial cell proliferation and angiogenesis. The chain is ARF GTPase-activating protein GIT1 from Rattus norvegicus (Rat).